The sequence spans 1522 residues: DNA topoisomerase 2-binding protein 1 (1522 aa).

BRCT domains lie at V101–D189 and F195–T284. At T298 the chain carries Phosphothreonine. Position 301 is a phosphoserine (S301). BRCT domains lie at A354–H444, T548–L633, and T641–I738. The segment at I756–L891 is interaction with CIP2A. A phosphothreonine mark is found at T779 and T848. A Nuclear localization signal motif is present at residues P852 to K858. S860 is subject to Phosphoserine. T861 bears the Phosphothreonine mark. 3 positions are modified to phosphoserine: S864, S886, and S888. The BRCT 6 domain occupies E900–H991. S1002 is subject to Phosphoserine. The disordered stretch occupies residues V1018 to K1058. The span at D1024–V1036 shows a compositional bias: acidic residues. Over residues M1039 to K1058 the composition is skewed to polar residues. 2 positions are modified to phosphothreonine: T1062 and T1064. Positions S1083–S1114 are enriched in polar residues. Residues S1083–R1118 are disordered. BRCT domains follow at residues E1259–W1351 and I1389–L1486. The segment at T1501–H1522 is disordered. S1504 bears the Phosphoserine mark. The Nuclear localization signal signature appears at K1517–R1520.

This sequence belongs to the TOPBP1 family. Interacts (via BRCT domains 1 and 2) with (phosphorylated) MDC1; promoting TOPBP1 recruitment to DNA damage sites during mitosis. Interacts (via BRCT domains 7 and 8) with (autophosphorylated) ATR; promoting activation of ATR. Interacts (via BRCT domains 7 and 8) with (phosphorylated) POLQ; specifically binds POLQ phosphorylated by PLK1, promoting POLQ recruitment to DNA damage sites. Interacts (via BRCT domains 1 and 2) with (phosphorylated) RAD9A. Interacts (via BRCT domain 2) with (phosphorylated) TP53BP1. Interacts (via BRCT domain 2) with (phosphorylated) HTATSF1. Interacts (via BRCT domains 7 and 8) with (phosphorylated) RAD51; promoting RAD51 recruitment to damaged chromatin. Interacts with CIP2A; forming the CIP2A-TOPBP1 complex. Interacts with POLE. Interacts with UBR5. Interacts with E2F1. Interacts with PML. Interacts with SMARCA2. Interacts with SMARCA4. Interacts with RHNO1. May interact with TOP2B. Interacts with TICRR. Interacts with HELB. Interacts (via residues 1233-1522) with RECQL4. Phosphorylated on serine and threonine residues in response to X-ray irradiation. Post-translationally, ubiquitinated and degraded by the proteasome. X-ray irradiation reduces ubiquitination. Deubiquitinated by USP13; leading to TOPBP1 stabilizion and activation of the ATR-TOPBP1 axis pathway. In terms of tissue distribution, highly expressed in heart, brain, placenta, lung and kidney.

The protein resides in the nucleus. The protein localises to the chromosome. It is found in the cytoplasm. Its subcellular location is the cytoskeleton. It localises to the microtubule organizing center. The protein resides in the centrosome. The protein localises to the spindle pole. In terms of biological role, scaffold protein that acts as a key protein-protein adapter in DNA replication and DNA repair. Composed of multiple BRCT domains, which specifically recognize and bind phosphorylated proteins, bringing proteins together into functional combinations. Required for DNA replication initiation but not for the formation of pre-replicative complexes or the elongation stages. Necessary for the loading of replication factors onto chromatin, including GMNC, CDC45, DNA polymerases and components of the GINS complex. Plays a central role in DNA repair by bridging proteins and promoting recruitment of proteins to DNA damage sites. Involved in double-strand break (DSB) repair via homologous recombination in S-phase by promoting the exchange between the DNA replication factor A (RPA) complex and RAD51. Mechanistically, TOPBP1 is recruited to DNA damage sites in S-phase via interaction with phosphorylated HTATSF1, and promotes the loading of RAD51, thereby facilitating RAD51 nucleofilaments formation and RPA displacement, followed by homologous recombination. Involved in microhomology-mediated end-joining (MMEJ) DNA repair by promoting recruitment of polymerase theta (POLQ) to DNA damage sites during mitosis. MMEJ is an alternative non-homologous end-joining (NHEJ) machinery that takes place during mitosis to repair DSBs in DNA that originate in S-phase. Recognizes and binds POLQ phosphorylated by PLK1, enabling its recruitment to DSBs for subsequent repair. Involved in G1 DNA damage checkpoint by acting as a molecular adapter that couples TP53BP1 and the 9-1-1 complex. In response to DNA damage, triggers the recruitment of checkpoint signaling proteins on chromatin, which activate the CHEK1 signaling pathway and block S-phase progression. Acts as an activator of the kinase activity of ATR. Also required for chromosomal stability when DSBs occur during mitosis by forming filamentous assemblies that bridge MDC1 and tether broken chromosomes during mitosis. Together with CIP2A, plays an essential role in the response to genome instability generated by the presence of acentric chromosome fragments derived from shattered chromosomes within micronuclei. Micronuclei, which are frequently found in cancer cells, consist of chromatin surrounded by their own nuclear membrane: following breakdown of the micronuclear envelope, a process associated with chromothripsis, the CIP2A-TOPBP1 complex tethers chromosome fragments during mitosis to ensure clustered segregation of the fragments to a single daughter cell nucleus, facilitating re-ligation with limited chromosome scattering and loss. Recruits the SWI/SNF chromatin remodeling complex to E2F1-responsive promoters, thereby down-regulating E2F1 activity and inhibiting E2F1-dependent apoptosis during G1/S transition and after DNA damage. The protein is DNA topoisomerase 2-binding protein 1 of Homo sapiens (Human).